The chain runs to 359 residues: Peroxisome assembly protein 12 (359 aa).

At 1 to 19 (MAEHGAHFTAASVADDQPS) the chain is on the peroxisomal matrix side. Residues 20–47 (IFEVVAQDSLMTAVRPALQHVVKVLAES) traverse the membrane as a helical segment. The Cytoplasmic portion of the chain corresponds to 48 to 51 (NPTH). Residues 52–76 (YGFLWRWFDEIFTLLDLLLQQHYLS) form a helical membrane-spanning segment. Over 77-109 (RTSASFSENFYGLKRIVMGDTHKSQRLASAGLP) the chain is Peroxisomal matrix. Residues 110–139 (KQQLWKSIMFLVLLPYLKVKLEKLVSSLRE) form a helical membrane-spanning segment. Residues 140 to 144 (EDEYS) are Cytoplasmic-facing. The helical transmembrane segment at 145–183 (IHPPSSRWKRFYRAFLAAYPFVNMAWEGWFLVQQLRYIL) threads the bilayer. The Peroxisomal matrix portion of the chain corresponds to 184 to 249 (GKAQHHSPLL…VGGVALSLST (66 aa)). A helical transmembrane segment spans residues 250-277 (GLSVGVFFLQFLDWWYSSENQETIKSLT). Residues 278–359 (ALPTPPPPVH…HLIKLYSPEN (82 aa)) lie on the Cytoplasmic side of the membrane. Zn(2+)-binding residues include cysteine 304, cysteine 307, cysteine 325, and cysteine 328. Residues 304–343 (CPLCRKTRVNDTVLATSGYVFCYRCVFHYVRSHQACPITG) form an RING-type; degenerate zinc finger.

The protein belongs to the pex2/pex10/pex12 family. Component of the PEX2-PEX10-PEX12 retrotranslocation channel, composed of PEX2, PEX10 and PEX12. Interacts with PEX19 via its cytoplasmic domain.

The protein resides in the peroxisome membrane. It functions in the pathway protein modification; protein ubiquitination. Its function is as follows. Component of a retrotranslocation channel required for peroxisome organization by mediating export of the PEX5 receptor from peroxisomes to the cytosol, thereby promoting PEX5 recycling. The retrotranslocation channel is composed of PEX2, PEX10 and PEX12; each subunit contributing transmembrane segments that coassemble into an open channel that specifically allows the passage of PEX5 through the peroxisomal membrane. PEX12 also regulates PEX5 recycling by activating the E3 ubiquitin-protein ligase activity of PEX10. When PEX5 recycling is compromised, PEX12 stimulates PEX10-mediated polyubiquitination of PEX5, leading to its subsequent degradation. This Homo sapiens (Human) protein is Peroxisome assembly protein 12.